Consider the following 356-residue polypeptide: Cell division protein ZipA (356 aa).

Residues 1-6 are Periplasmic-facing; it reads MEDLQL. A helical membrane pass occupies residues 7–27; the sequence is VLFVLGAIAIVAVLVHGFWSI. The Cytoplasmic portion of the chain corresponds to 28 to 356; it reads RRQQPKSLKD…DYLHRIRANA (329 aa). Positions 132-155 are disordered; that stretch reads PAQPDFSLQPPVAKEQHRGPKVSR.

This sequence belongs to the ZipA family. In terms of assembly, interacts with FtsZ via their C-terminal domains.

It is found in the cell inner membrane. Its function is as follows. Essential cell division protein that stabilizes the FtsZ protofilaments by cross-linking them and that serves as a cytoplasmic membrane anchor for the Z ring. Also required for the recruitment to the septal ring of downstream cell division proteins. This is Cell division protein ZipA from Shewanella baltica (strain OS185).